The chain runs to 239 residues: Probable septum site-determining protein MinC (239 aa).

The protein belongs to the MinC family. In terms of assembly, interacts with MinD and FtsZ.

Functionally, cell division inhibitor that blocks the formation of polar Z ring septums. Rapidly oscillates between the poles of the cell to destabilize FtsZ filaments that have formed before they mature into polar Z rings. Prevents FtsZ polymerization. The sequence is that of Probable septum site-determining protein MinC from Colwellia psychrerythraea (strain 34H / ATCC BAA-681) (Vibrio psychroerythus).